The chain runs to 597 residues: Putative lipase ATG15 (597 aa).

Residues 1–15 (MTLEKNRHANKGTSW) lie on the Cytoplasmic side of the membrane. The helical; Signal-anchor for type II membrane protein transmembrane segment at 16–36 (TWMIYKFVVGVITVAILVLFI) threads the bilayer. The Lumenal segment spans residues 37-597 (TQKSVSQAQD…DDDEDTFERK (561 aa)). Residues Asn-195, Asn-262, and Asn-346 are each glycosylated (N-linked (GlcNAc...) asparagine). The active-site Charge relay system is the Ser-364. Asn-481 carries an N-linked (GlcNAc...) asparagine glycan. The segment at 507-570 (EKDEPKLPNP…PTDQDPPKKC (64 aa)) is disordered. A compositionally biased stretch (low complexity) spans 519 to 554 (SSSKSTLSTKTTSLKSSSTYSGSTSSSTVTKTTQTS).

It belongs to the AB hydrolase superfamily. Lipase family. Binds to both phosphatidylinositol (PI) and phosphatidylinositol 3,5-bisphosphate (PIP2).

It is found in the endosome. Its subcellular location is the multivesicular body membrane. The protein resides in the prevacuolar compartment membrane. It catalyses the reaction a triacylglycerol + H2O = a diacylglycerol + a fatty acid + H(+). Its function is as follows. Lipase which is essential for lysis of subvacuolar cytoplasm to vacuole targeted bodies and intravacuolar autophagic bodies. Involved in the lysis of intravacuolar multivesicular body (MVB) vesicles. The intravacuolar membrane disintegration by ATG15 is critical to life span extension. In Candida albicans (strain SC5314 / ATCC MYA-2876) (Yeast), this protein is Putative lipase ATG15 (ATG15).